The sequence spans 726 residues: L-lysine 6-oxidase (726 aa).

A cross-link (4'-cysteinyl-tryptophylquinone (Cys-Trp)) is located at residues 516-581 (CTIQTVNFSE…LPPAYYSYWW (66 aa)). At Trp-581 the chain carries Tryptophylquinone.

As to quaternary structure, homotetramer. The cofactor is cysteine tryptophylquinone residue. Post-translationally, the cysteine tryptophylquinone (CTQ) is generated by oxidation of the indole ring of a tryptophan residue to form tryptophylquinone, followed by covalent cross-linking with a cysteine residue.

Its subcellular location is the secreted. It catalyses the reaction L-lysine + O2 + H2O = (S)-2-amino-6-oxohexanoate + H2O2 + NH4(+). Inhibited by aminoguanidine, amiloride and beta-aminopropionitrile. Has antibacterial activity against a wide spectrum of Gram-positive and Gram-negative bacteria including nosocomial isolates of S.aureus and Pseudomonas sp. The antimicrobial activity is due to hydrogen peroxide generated by its lysine oxidase activity. Also has autotoxic activity. Involved in biofilm differentiation; responsible for cell death within microcolonies during biofilm development which is linked to the generation of a phenotypically diverse dispersal population and thus may play a role in colonization. The polypeptide is L-lysine 6-oxidase (lodA) (Marinomonas mediterranea (strain ATCC 700492 / JCM 21426 / NBRC 103028 / MMB-1)).